A 153-amino-acid chain; its full sequence is Putative pre-16S rRNA nuclease (153 aa).

This sequence belongs to the YqgF nuclease family.

It localises to the cytoplasm. Its function is as follows. Could be a nuclease involved in processing of the 5'-end of pre-16S rRNA. This Prochlorococcus marinus (strain MIT 9215) protein is Putative pre-16S rRNA nuclease.